The chain runs to 221 residues: Guanylate kinase (221 aa).

Positions 20–199 constitute a Guanylate kinase-like domain; it reads GLMFILSSPS…CFGKVREILA (180 aa). 27 to 34 provides a ligand contact to ATP; sequence SPSGAGKT.

It belongs to the guanylate kinase family.

The protein resides in the cytoplasm. It carries out the reaction GMP + ATP = GDP + ADP. In terms of biological role, essential for recycling GMP and indirectly, cGMP. This Novosphingobium aromaticivorans (strain ATCC 700278 / DSM 12444 / CCUG 56034 / CIP 105152 / NBRC 16084 / F199) protein is Guanylate kinase.